The following is a 640-amino-acid chain: Receptor-binding protein pb5 (640 aa).

Residues 571 to 580 (KLQAAAYNPT) form an interaction with host FhuA region.

Monomer. Interacts with straight fiber protein pb4. Interacts with the host FhuA receptor; this interaction is necessary for the entry of the viral genome into the host cell.

It localises to the virion. Structural component of the distal part of the tail. Mediates T5 irreversible binding to its host entry receptor, the E.coli outer membrane ferrichrome transporter FhuA protein. Upon binding to host FhuA, pb5 undergoes conformational changes that are probably the key to the transmission of the signal through the tail to the capsid, triggering DNA release. This Escherichia coli (Enterobacteria phage T5) protein is Receptor-binding protein pb5 (oad).